We begin with the raw amino-acid sequence, 118 residues long: Small ribosomal subunit protein uS10 (118 aa).

At Ser37 the chain carries Phosphoserine.

It belongs to the universal ribosomal protein uS10 family. As to quaternary structure, component of the small ribosomal subunit (SSU). Mature yeast ribosomes consist of a small (40S) and a large (60S) subunit. The 40S small subunit contains 1 molecule of ribosomal RNA (18S rRNA) and at least 33 different proteins. The large 60S subunit contains 3 rRNA molecules (25S, 5.8S and 5S rRNA) and at least 46 different proteins.

It localises to the cytoplasm. Its function is as follows. Component of the ribosome, a large ribonucleoprotein complex responsible for the synthesis of proteins in the cell. The small ribosomal subunit (SSU) binds messenger RNAs (mRNAs) and translates the encoded message by selecting cognate aminoacyl-transfer RNA (tRNA) molecules. The large subunit (LSU) contains the ribosomal catalytic site termed the peptidyl transferase center (PTC), which catalyzes the formation of peptide bonds, thereby polymerizing the amino acids delivered by tRNAs into a polypeptide chain. The nascent polypeptides leave the ribosome through a tunnel in the LSU and interact with protein factors that function in enzymatic processing, targeting, and the membrane insertion of nascent chains at the exit of the ribosomal tunnel. The protein is Small ribosomal subunit protein uS10 (rps20) of Schizosaccharomyces pombe (strain 972 / ATCC 24843) (Fission yeast).